Consider the following 542-residue polypeptide: Amino-acid acetyltransferase, mitochondrial (542 aa).

The transit peptide at 1-14 (MLFRRLLTTKVGYH) directs the protein to the mitochondrion. Residues 368-534 (AGSAQLPAHK…LREYITYVRD (167 aa)) enclose the N-acetyltransferase domain.

This sequence belongs to the acetyltransferase family.

It is found in the mitochondrion. The enzyme catalyses L-glutamate + acetyl-CoA = N-acetyl-L-glutamate + CoA + H(+). It participates in amino-acid biosynthesis; L-arginine biosynthesis; N(2)-acetyl-L-ornithine from L-glutamate: step 1/4. Its function is as follows. N-acetylglutamate synthase involved in arginine biosynthesis. The protein is Amino-acid acetyltransferase, mitochondrial (ARG2) of Eremothecium gossypii (strain ATCC 10895 / CBS 109.51 / FGSC 9923 / NRRL Y-1056) (Yeast).